We begin with the raw amino-acid sequence, 564 residues long: MTLLITGDSIVSAEAVWDHATMANRELAFKAGDVIKVLDASNKDWWWGQIDDEEGWFPASFVRLWVNQEDEVEEGPSDVQNGHLDPNSDCLCLGRPLQNRDQMRANVINEIMSTERHYIKHLKDICEGYLKQCRKRRDMFSDEQLKVIFGNIEDIYRFQMGFVRDLEKQYNNDDPHLSEIGPCFLEHQDGFWIYSEYCNNHLDACMELSKLMKDSRYQHFFEACRLLQQMIDIAIDGFLLTPVQKICKYPLQLAELLKYTAQDHSDYRYVAAALAVMRNVTQQINERKRRLENIDKIAQWQASVLDWEGEDILDRSSELIYTGEMAWIYQPYGRNQQRVFFLFDHQMVLCKKDLIRRDILYYKGRIDMDKYEVVDIEDGRDDDFNVSMKNAFKLHNKETEEIHLFFAKKLEEKIRWLRAFREERKMVQEDEKIGFEISENQKRQAAMTVRKVPKQKGVNSARSVPPSYPPPQDPLNHGQYLVPDGIAQSQVFEFTEPKRSQSPFWQNFSRYCEGIKKPNRSKRVSDYDDAGVDFCSGNILHSGCFFYHWGFPCCSTAGSLQFCI.

Residues 8–67 (DSIVSAEAVWDHATMANRELAFKAGDVIKVLDASNKDWWWGQIDDEEGWFPASFVRLWVN) enclose the SH3 domain. The tract at residues 100-110 (RDQMRANVINE) is interaction with GPHN. Residues 103–287 (MRANVINEIM…RNVTQQINER (185 aa)) form the DH domain. The PH domain occupies 318 to 425 (ELIYTGEMAW…WLRAFREERK (108 aa)). The tract at residues 451 to 470 (KVPKQKGVNSARSVPPSYPP) is disordered. Ser-502 carries the phosphoserine modification.

Interacts with GPHN.

It localises to the cytoplasm. The protein localises to the postsynaptic density. Acts as a guanine nucleotide exchange factor (GEF) for CDC42. Promotes formation of GPHN clusters. The protein is Rho guanine nucleotide exchange factor 9 (ARHGEF9) of Pongo abelii (Sumatran orangutan).